The following is a 504-amino-acid chain: Maturase K (504 aa).

It belongs to the intron maturase 2 family. MatK subfamily.

The protein localises to the plastid. It localises to the chloroplast. In terms of biological role, usually encoded in the trnK tRNA gene intron. Probably assists in splicing its own and other chloroplast group II introns. The polypeptide is Maturase K (Lepidium campestre (Field pepperwort)).